We begin with the raw amino-acid sequence, 500 residues long: Cytochrome P450 11B3, mitochondrial (500 aa).

Residues 1 to 24 constitute a mitochondrion transit peptide; sequence MALRVTADVWLARPWQCLHRTRAL. Heme is bound at residue Cys447.

The protein belongs to the cytochrome P450 family. Heme serves as cofactor. As to expression, expressed in the adrenal cortex and in different brain tissues, including hippocampus, hypothalamus, cerebellum, cerebral cortex, and midbrain.

The protein localises to the mitochondrion membrane. It carries out the reaction a steroid + 2 reduced [adrenodoxin] + O2 + 2 H(+) = an 11beta-hydroxysteroid + 2 oxidized [adrenodoxin] + H2O. The enzyme catalyses 21-hydroxyprogesterone + 2 reduced [adrenodoxin] + O2 + 2 H(+) = corticosterone + 2 oxidized [adrenodoxin] + H2O. It catalyses the reaction 21-hydroxyprogesterone + 2 reduced [adrenodoxin] + O2 + 2 H(+) = 18-hydroxy-11-deoxycorticosterone + 2 oxidized [adrenodoxin] + H2O. The catalysed reaction is 21-hydroxyprogesterone + 2 reduced [adrenodoxin] + O2 + 2 H(+) = 19-hydroxy-11-deoxycorticosterone + 2 oxidized [adrenodoxin] + H2O. Functionally, a cytochrome P450 monooxygenase involved in the biosynthesis of adrenal corticoids. Catalyzes the hydroxylation of steroids at 11beta, 18- or 19-positions, with preferred regioselectivity at 11beta and 18. Converts 11-deoxycorticosterone into corticosterone, 18-hydroxy-11-deoxycorticosterone, and/or 19-hydroxy-11-deoxycorticosterone, but not to 18-hydroxycorticosterone or aldosterone. Mechanistically, uses molecular oxygen inserting one oxygen atom into a substrate for hydroxylation and reducing the second into a water molecule. Two electrons are provided by NADPH via a two-protein mitochondrial transfer system comprising flavoprotein FDXR (adrenodoxin/ferredoxin reductase) and nonheme iron-sulfur protein FDX1 or FDX2 (adrenodoxin/ferredoxin). The protein is Cytochrome P450 11B3, mitochondrial (Cyp11b3) of Rattus norvegicus (Rat).